The primary structure comprises 644 residues: 3D-(3,5/4)-trihydroxycyclohexane-1,2-dione hydrolase (644 aa).

Residue glutamate 65 participates in thiamine diphosphate binding. The tract at residues 442–522 (SLPGDLQRMW…INVLLFDNSG (81 aa)) is thiamine pyrophosphate binding. Mg(2+) contacts are provided by aspartate 493 and asparagine 520.

It belongs to the TPP enzyme family. It depends on Mg(2+) as a cofactor. Thiamine diphosphate serves as cofactor.

It catalyses the reaction 3D-3,5/4-trihydroxycyclohexane-1,2-dione + H2O = 5-deoxy-D-glucuronate + H(+). It functions in the pathway polyol metabolism; myo-inositol degradation into acetyl-CoA; acetyl-CoA from myo-inositol: step 3/7. Involved in the cleavage of the C1-C2 bond of 3D-(3,5/4)-trihydroxycyclohexane-1,2-dione (THcHDO) to yield 5-deoxy-glucuronate (5DG). This is 3D-(3,5/4)-trihydroxycyclohexane-1,2-dione hydrolase from Bacillus thuringiensis (strain Al Hakam).